The sequence spans 125 residues: Ribosome-binding factor A (125 aa).

This sequence belongs to the RbfA family. Monomer. Binds 30S ribosomal subunits, but not 50S ribosomal subunits or 70S ribosomes.

It is found in the cytoplasm. Functionally, one of several proteins that assist in the late maturation steps of the functional core of the 30S ribosomal subunit. Associates with free 30S ribosomal subunits (but not with 30S subunits that are part of 70S ribosomes or polysomes). Required for efficient processing of 16S rRNA. May interact with the 5'-terminal helix region of 16S rRNA. The polypeptide is Ribosome-binding factor A (Paracidovorax citrulli (strain AAC00-1) (Acidovorax citrulli)).